The chain runs to 305 residues: Glycine--tRNA ligase alpha subunit (305 aa).

This sequence belongs to the class-II aminoacyl-tRNA synthetase family. Tetramer of two alpha and two beta subunits.

It localises to the cytoplasm. The enzyme catalyses tRNA(Gly) + glycine + ATP = glycyl-tRNA(Gly) + AMP + diphosphate. The polypeptide is Glycine--tRNA ligase alpha subunit (Streptococcus suis (strain 98HAH33)).